Reading from the N-terminus, the 687-residue chain is MCASLNEVKKNDTYGVSQKGYNDNFSESEGVLHGSKSMPTSMKNMLQSPTMVNMCDILQNKEAANDEKPVIPTTDTATAGTGTEDISSTQSEETDQNSHLIASEILEGTFKDVSYKEYANFLGNDNNNQVLTEFVKLLSPLPSSLLETLFNLSKSIYFIAEAQNIDRILECLSKEWIACHPNTHWKSGYKSCHIVLFSLLILNSDLHNNFQVDHKKIKFSMVAFINNTLRALREENEYEELKIYSREHLIIEELSEYYKTLNETPLPLCTESRTSINTSDNQSSLKRFSTLGSREFSTSNLRSVNSNSTTLYSRDGQVSVREMSAKSNKNFHNNHPMDALYLKESFDDGLITENGSSWFMDDLILISKKSLPRKYSKRDKDQVAAPKTTSKRNKSFFGWLKPSKTTTLIEHASRRTSLSYLNKDSEWERVKIQVKEGRIFIFKIKPDVKDIIQSSETDSATIDYFKDISSSYFAYSLLEAEAHVVQDNIIIGSGAMKSNVCNKNTKRKSGNFTVSFPENINGPKLVLEFQTRSVEEAHKFMDCINFWAGRISPVPLTQFEAVSNAEYGWSDKILTEHASLNLKNIVVSEWKPLLGLELLYEDAKDVEMVELKERLKELMNFTRQLGIWIDKHNEIKDKLVEIWSFDDNYFEAVMNNWNSRYLYMNNQYKKRLSYLKALQKAMGSVQF.

A compositionally biased stretch (polar residues) spans 14–27; it reads YGVSQKGYNDNFSE. 2 disordered regions span residues 14-35 and 63-97; these read YGVS…LHGS and AAND…TDQN. The region spanning 57 to 264 is the SEC7 domain; the sequence is ILQNKEAAND…SEYYKTLNET (208 aa). The segment covering 73 to 83 has biased composition (low complexity); that stretch reads TTDTATAGTGT. Thr290 carries the post-translational modification Phosphothreonine. A phosphoserine mark is found at Ser293 and Ser299. In terms of domain architecture, PH spans 412–551; sequence ASRRTSLSYL…DCINFWAGRI (140 aa).

The protein belongs to the YEL1 family.

It localises to the cytoplasm. It is found in the cell membrane. The protein localises to the bud neck. Its subcellular location is the bud tip. Functionally, guanine nucleotide exchange factor for ARF3 required for localization of ARF3 to the bud neck and tip and involved in actin patch polarization. The protein is Guanine-nucleotide exchange factor YEL1 (YEL1) of Saccharomyces cerevisiae (strain RM11-1a) (Baker's yeast).